The following is a 540-amino-acid chain: MNIFIGGAWPYANGSLHLGHVAALLPGDVMARYFRAKGENVLYVSGSDCHGTPISIRAKNENVSPQEIAEQYHKEFKYCFEELGFSYDYYSRTDDAYHKEEVQRIIKLLYENEFIYEKEVEQLYCADCNQFLPDRFVEGICPVCKNIARGDQCDVCSTILDPLDLHHRKCKICGSEPEIKNGNQLFFKLSKFQEMLQNHLEDSKKKWRVNALNNTERYLKEGLQDRAISRDLNWGIEIPIKGYEEKRVYVWIDAVLGYYTVSKKWGIERNRDWETFWSKEAIHYFIHGKDNIPFHSLIFPALLNGIGYKKMPDRIISSEYITLEGKKISTSNNWAVWVPDMIERYNVDSIRYFLLANGPEKRDADFSWREFINSNNGELLGAYGNLVNRTFVFVKKYFNNTIPVGKLEEEIERATEKLYDEVGKSIESGNLRLALEQIFQFIRSINKYFDEETPWTTVNTNIDDCSNTIYNCLFSIINIANLLNPFLPSSSAKIKEWMGCKEASWNKLSLSSGIQLGDFNILFERLDKKLAEEELAKLGR.

The 'HIGH' region motif lies at 10–20 (PYANGSLHLGH). Zn(2+)-binding residues include cysteine 141, cysteine 144, cysteine 153, and cysteine 156. The short motif at 327–331 (KISTS) is the 'KMSKS' region element. Threonine 330 contacts ATP.

This sequence belongs to the class-I aminoacyl-tRNA synthetase family. MetG type 1 subfamily. In terms of assembly, monomer. It depends on Zn(2+) as a cofactor.

Its subcellular location is the cytoplasm. The enzyme catalyses tRNA(Met) + L-methionine + ATP = L-methionyl-tRNA(Met) + AMP + diphosphate. Is required not only for elongation of protein synthesis but also for the initiation of all mRNA translation through initiator tRNA(fMet) aminoacylation. The protein is Methionine--tRNA ligase 1 of Alkaliphilus oremlandii (strain OhILAs) (Clostridium oremlandii (strain OhILAs)).